The following is a 236-amino-acid chain: Purine nucleoside phosphorylase DeoD-type (236 aa).

Histidine 5 is an a purine D-ribonucleoside binding site. Residues glycine 21, arginine 25, arginine 44, and 88–91 (RVGT) contribute to the phosphate site. Residues 180–182 (EME) and 204–205 (SD) each bind a purine D-ribonucleoside. Residue aspartate 205 is the Proton donor of the active site.

Belongs to the PNP/UDP phosphorylase family. As to quaternary structure, homohexamer; trimer of homodimers.

It catalyses the reaction a purine D-ribonucleoside + phosphate = a purine nucleobase + alpha-D-ribose 1-phosphate. The catalysed reaction is a purine 2'-deoxy-D-ribonucleoside + phosphate = a purine nucleobase + 2-deoxy-alpha-D-ribose 1-phosphate. Catalyzes the reversible phosphorolytic breakdown of the N-glycosidic bond in the beta-(deoxy)ribonucleoside molecules, with the formation of the corresponding free purine bases and pentose-1-phosphate. This Shewanella baltica (strain OS223) protein is Purine nucleoside phosphorylase DeoD-type.